Here is a 196-residue protein sequence, read N- to C-terminus: Large ribosomal subunit protein mL66 (196 aa).

Residues M1–G34 constitute a mitochondrion transit peptide.

Belongs to the bacterial ribosomal protein bS18 family. Mitochondrion-specific ribosomal protein mL66 subfamily. As to quaternary structure, component of the mitochondrial ribosome small subunit (28S) which comprises a 12S rRNA and about 30 distinct proteins.

The protein localises to the mitochondrion. The protein is Large ribosomal subunit protein mL66 (Mrps18a) of Mus musculus (Mouse).